The following is a 271-amino-acid chain: Aquaporin-2 (271 aa).

At 1 to 11 the chain is on the cytoplasmic side; that stretch reads MWELRSIAFSR. A helical transmembrane segment spans residues 12–32; it reads AVLAEFLATLLFVFFGLGSAL. Residues 33–40 are Extracellular-facing; that stretch reads QWASSPPS. A helical membrane pass occupies residues 41 to 59; sequence VLQIAVAFGLGIGILVQAL. Residues 60 to 64 are Cytoplasmic-facing; the sequence is GHVSG. The discontinuously helical intramembrane region spans 65 to 74; sequence AHINPAVTVA. The NPA 1 motif lies at 68–70; it reads NPA. Over 75–85 the chain is Cytoplasmic; it reads CLVGCHVSFLR. The helical transmembrane segment at 86 to 107 threads the bilayer; the sequence is AAFYVAAQLLGAVAGAAILHEI. Residues 108–127 lie on the Extracellular side of the membrane; it reads TPVEIRGDLAVNALHNNATA. Asparagine 124 carries N-linked (GlcNAc...) asparagine glycosylation. A helical membrane pass occupies residues 128–148; the sequence is GQAVTVELFLTMQLVLCIFAS. Residues 149–156 are Cytoplasmic-facing; it reads TDERRGDN. The helical transmembrane segment at 157–176 threads the bilayer; it reads LGSPALSIGFSVTLGHLLGI. Topologically, residues 177-180 are extracellular; that stretch reads YFTG. Positions 181–193 form an intramembrane region, discontinuously helical; that stretch reads CSMNPARSLAPAV. Positions 184–186 match the NPA 2 motif; sequence NPA. Topologically, residues 194-201 are extracellular; that stretch reads VTGKFDDH. Residues 202–222 traverse the membrane as a helical segment; that stretch reads WVFWIGPLVGAIIGSLLYNYL. Residues 223–271 lie on the Cytoplasmic side of the membrane; sequence LFPSAKSLQERLAVLKGLEPDTDWEEREVRRRQSVELHSPQSLPRGSKA. The disordered stretch occupies residues 251 to 271; the sequence is VRRRQSVELHSPQSLPRGSKA. Phosphoserine is present on residues serine 256, serine 261, serine 264, and serine 269. The segment covering 261–271 has biased composition (polar residues); the sequence is SPQSLPRGSKA.

The protein belongs to the MIP/aquaporin (TC 1.A.8) family. As to quaternary structure, homotetramer. In terms of processing, ser-256 phosphorylation is necessary and sufficient for expression at the apical membrane. Endocytosis is not phosphorylation-dependent. Post-translationally, N-glycosylated. As to expression, detected in kidney, in cortical and the medullary collecting tubules (at protein level). Detected in kidney medulla and cortex.

It localises to the apical cell membrane. The protein resides in the basolateral cell membrane. Its subcellular location is the cell membrane. The protein localises to the cytoplasmic vesicle membrane. It is found in the golgi apparatus. It localises to the trans-Golgi network membrane. It carries out the reaction H2O(in) = H2O(out). It catalyses the reaction glycerol(in) = glycerol(out). Forms a water-specific channel that provides the plasma membranes of renal collecting duct with high permeability to water, thereby permitting water to move in the direction of an osmotic gradient. Plays an essential role in renal water homeostasis. Could also be permeable to glycerol. In Rattus norvegicus (Rat), this protein is Aquaporin-2.